Reading from the N-terminus, the 433-residue chain is Inositol hexakisphosphate kinase 1 (433 aa).

The tract at residues 100–160 is disordered; it reads ETVEQDDTPE…SPKVELHSHS (61 aa). The segment covering 113-123 has biased composition (basic residues); sequence PRRKHSRRSLH. Polar residues predominate over residues 139–149; that stretch reads SFETSESSQEA. A compositionally biased stretch (basic and acidic residues) spans 150–160; it reads KSPKVELHSHS. S151 is subject to Phosphoserine. A substrate-binding site is contributed by 220–228; that stretch reads PCVLDLKMG. The segment at 359 to 383 is disordered; the sequence is EVPPPCGPSTSPSSTSLEAGPSSPP.

This sequence belongs to the inositol phosphokinase (IPK) family. In terms of tissue distribution, highly expressed in brain and testis. Detected at much lower levels in heart, kidney, liver, lung and spleen.

The protein resides in the cytoplasm. It localises to the nucleus. The enzyme catalyses 1D-myo-inositol hexakisphosphate + ATP = 5-diphospho-1D-myo-inositol 1,2,3,4,6-pentakisphosphate + ADP. It catalyses the reaction 1-diphospho-1D-myo-inositol 2,3,4,5,6-pentakisphosphate + ATP + H(+) = 1,5-bis(diphospho)-1D-myo-inositol 2,3,4,6-tetrakisphosphate + ADP. Its function is as follows. Converts inositol hexakisphosphate (InsP6) to diphosphoinositol pentakisphosphate (InsP7/PP-InsP5). Converts 1,3,4,5,6-pentakisphosphate (InsP5) to PP-InsP4. This is Inositol hexakisphosphate kinase 1 (Ip6k1) from Mus musculus (Mouse).